The sequence spans 287 residues: Prepilin leader peptidase/N-methyltransferase (287 aa).

The helical transmembrane segment at 12-32 (FMYLVVGLFSLAVGSLLNVII) threads the bilayer. Zn(2+) contacts are provided by cysteine 71, cysteine 74, cysteine 96, and cysteine 99. 5 consecutive transmembrane segments (helical) span residues 127–147 (FTIQLLFALLAIWILISLVFI), 158–178 (LTLGLLWIGLIANTQNVFVSL), 182–202 (VLSCAGAYLALWLFINLFYLM), 215–235 (LFAAFGAWLGWMYLPIILLIS), and 259–279 (PFGPFLCISGLIAMFWGDSII).

It belongs to the peptidase A24 family. The cofactor is Zn(2+).

It localises to the cell inner membrane. The catalysed reaction is Typically cleaves a -Gly-|-Phe- bond to release an N-terminal, basic peptide of 5-8 residues from type IV prepilin, and then N-methylates the new N-terminal amino group, the methyl donor being S-adenosyl-L-methionine.. Plays an essential role in type IV pili and type II pseudopili formation by proteolytically removing the leader sequence from substrate proteins and subsequently monomethylating the alpha-amino group of the newly exposed N-terminal phenylalanine. The protein is Prepilin leader peptidase/N-methyltransferase (pilD) of Legionella pneumophila.